Consider the following 427-residue polypeptide: Serine--tRNA ligase (427 aa).

231–233 (TAE) serves as a coordination point for L-serine. Residue 262 to 264 (RSE) coordinates ATP. Glutamate 285 contacts L-serine. 349–352 (EISS) serves as a coordination point for ATP. Serine 385 is a binding site for L-serine.

It belongs to the class-II aminoacyl-tRNA synthetase family. Type-1 seryl-tRNA synthetase subfamily. As to quaternary structure, homodimer. The tRNA molecule binds across the dimer.

The protein localises to the cytoplasm. The catalysed reaction is tRNA(Ser) + L-serine + ATP = L-seryl-tRNA(Ser) + AMP + diphosphate + H(+). It catalyses the reaction tRNA(Sec) + L-serine + ATP = L-seryl-tRNA(Sec) + AMP + diphosphate + H(+). It functions in the pathway aminoacyl-tRNA biosynthesis; selenocysteinyl-tRNA(Sec) biosynthesis; L-seryl-tRNA(Sec) from L-serine and tRNA(Sec): step 1/1. In terms of biological role, catalyzes the attachment of serine to tRNA(Ser). Is also able to aminoacylate tRNA(Sec) with serine, to form the misacylated tRNA L-seryl-tRNA(Sec), which will be further converted into selenocysteinyl-tRNA(Sec). The sequence is that of Serine--tRNA ligase from Methylococcus capsulatus (strain ATCC 33009 / NCIMB 11132 / Bath).